A 157-amino-acid chain; its full sequence is Snaclec 3 (157 aa).

The signal sequence occupies residues 1 to 23 (MGRLIFLSFGWLVVFLSLSGTGA). Cystine bridges form between C27/C38, C55/C153, and C128/C145. Residues 34–154 (YGQHCYRAFS…CAGHYPFICK (121 aa)) enclose the C-type lectin domain.

It belongs to the snaclec family. In terms of assembly, heterodimer; disulfide-linked. In terms of tissue distribution, expressed by the venom gland.

Its subcellular location is the secreted. Functionally, interferes with one step of hemostasis (modulation of platelet aggregation, or coagulation cascade, for example). The chain is Snaclec 3 from Bitis gabonica (Gaboon adder).